Consider the following 470-residue polypeptide: MDQPHALLVASPGLGHLIPILELGNRLSSVLNIHVTILAVTSGSSSPTETEAIHAAAARTICQITEIPSVDVDNLVEPDATIFTKMVVKMRAMKPAVRDAVKLMKRKPTVMIVDFLGTELMSVADDVGMTAKYVYVPTHAWFLAVMVYLPVLDTVVEGEYVDIKEPLKIPGCKPVGPKELMETMLDRSGQQYKECVRAGLEVPMSDGVLVNTWEELQGNTLAALREDEELSRVMKVPVYPIGPIVRTNQHVDKPNSIFEWLDEQRERSVVFVCLGSGGTLTFEQTVELALGLELSGQRFVWVLRRPASYLGAISSDDEQVSASLPEGFLDRTRGVGIVVTQWAPQVEILSHRSIGGFLSHCGWSSALESLTKGVPIIAWPLYAEQWMNATLLTEEIGVAVRTSELPSERVIGREEVASLVRKIMAEEDEEGQKIRAKAEEVRVSSERAWSKDGSSYNSLFEWAKRCYLVP.

UDP-alpha-D-glucose is bound by residues S276, 343–345 (APQ), 360–368 (HCGWSSALE), and 382–385 (YAEQ).

It belongs to the UDP-glycosyltransferase family.

This Arabidopsis thaliana (Mouse-ear cress) protein is UDP-glycosyltransferase 72D1 (UGT72D1).